The primary structure comprises 229 residues: Large ribosomal subunit protein uL1 (229 aa).

The protein belongs to the universal ribosomal protein uL1 family. As to quaternary structure, part of the 50S ribosomal subunit.

Functionally, binds directly to 23S rRNA. The L1 stalk is quite mobile in the ribosome, and is involved in E site tRNA release. Its function is as follows. Protein L1 is also a translational repressor protein, it controls the translation of the L11 operon by binding to its mRNA. The protein is Large ribosomal subunit protein uL1 of Clostridium botulinum (strain ATCC 19397 / Type A).